The sequence spans 470 residues: Zinc finger CCCH domain-containing protein 7 (470 aa).

The segment at 122-144 (AYSKKESEKQSGQNNTSTASRNH) is disordered. Over residues 131 to 142 (QSGQNNTSTASR) the composition is skewed to polar residues. 5 consecutive C3H1-type zinc fingers follow at residues 240 to 269 (AKKK…HDPS), 273 to 294 (VCTK…HKVI), 295 to 321 (PERM…HVHV), 322 to 349 (NPIA…HSYN), and 350 to 372 (CPVF…HPKN). Positions 370–381 (PKNQSKGRKRKR) are enriched in basic residues. The disordered stretch occupies residues 370–389 (PKNQSKGRKRKRTNEPSQKN).

Its function is as follows. Possesses RNA-binding and ribonuclease activities in vitro. This is Zinc finger CCCH domain-containing protein 7 from Arabidopsis thaliana (Mouse-ear cress).